Consider the following 79-residue polypeptide: D-alanyl carrier protein (79 aa).

Residues 1–77 form the Carrier domain; that stretch reads MSIEETVIEL…KIVQGVEELQ (77 aa). Ser35 bears the O-(pantetheine 4'-phosphoryl)serine mark.

This sequence belongs to the DltC family. 4'-phosphopantetheine is transferred from CoA to a specific serine of apo-DCP.

The protein resides in the cytoplasm. The protein operates within cell wall biogenesis; lipoteichoic acid biosynthesis. In terms of biological role, carrier protein involved in the D-alanylation of lipoteichoic acid (LTA). The loading of thioester-linked D-alanine onto DltC is catalyzed by D-alanine--D-alanyl carrier protein ligase DltA. The DltC-carried D-alanyl group is further transferred to cell membrane phosphatidylglycerol (PG) by forming an ester bond, probably catalyzed by DltD. D-alanylation of LTA plays an important role in modulating the properties of the cell wall in Gram-positive bacteria, influencing the net charge of the cell wall. The polypeptide is D-alanyl carrier protein (Streptococcus pyogenes serotype M1).